Reading from the N-terminus, the 353-residue chain is UPF0283 membrane protein YcjF (353 aa).

The next 3 helical transmembrane spans lie at 70–90 (MVMGGLALFGASVVGQGVQWT), 100–120 (VALGGCAAGALIVGAGVGSVV), and 213–233 (ESTLMIAVSPLALVDMAFIAW).

This sequence belongs to the UPF0283 family.

The protein resides in the cell inner membrane. This Salmonella schwarzengrund (strain CVM19633) protein is UPF0283 membrane protein YcjF.